Here is a 256-residue protein sequence, read N- to C-terminus: Cell division protein DivIB (256 aa).

Residues 1–23 (MSKDLISTDEYIKIKKKRKRIKK) lie on the Cytoplasmic side of the membrane. A helical membrane pass occupies residues 24–44 (IVVLFIFLISILVTLCLKIPY). One can recognise a POTRA domain in the interval 45–113 (FNIESIEIKG…NKLQIYVKER (69 aa)). The Extracellular portion of the chain corresponds to 45-256 (FNIESIEIKG…EGNPVFYIEK (212 aa)).

Belongs to the FtsQ/DivIB family. DivIB subfamily.

The protein localises to the cell membrane. Cell division protein that may be involved in stabilizing or promoting the assembly of the division complex. The polypeptide is Cell division protein DivIB (Clostridium botulinum (strain Hall / ATCC 3502 / NCTC 13319 / Type A)).